Here is a 145-residue protein sequence, read N- to C-terminus: Hemoglobin subunit beta-3 (145 aa).

A Globin domain is found at 1–145 (MLTAEEKAAV…VANALAHRYH (145 aa)). Thr11 is subject to Phosphothreonine. An N6-acetyllysine modification is found at Lys58. His62 contacts heme b. Lys81 is subject to N6-acetyllysine. His91 provides a ligand contact to heme b. Cys92 is subject to S-nitrosocysteine.

This sequence belongs to the globin family. As to quaternary structure, heterotetramer of two alpha chains and two beta chains. As to expression, red blood cells.

Involved in oxygen transport from the lung to the various peripheral tissues. In Odocoileus virginianus virginianus (Virginia white-tailed deer), this protein is Hemoglobin subunit beta-3 (HBB).